The following is a 394-amino-acid chain: Elongation factor Tu (394 aa).

A tr-type G domain is found at 10 to 204 (KPHVNVGTIG…ALDSYIPEPE (195 aa)). Residues 19-26 (GHVDHGKT) are G1. 19-26 (GHVDHGKT) contributes to the GTP binding site. Thr-26 is a binding site for Mg(2+). The segment at 60 to 64 (GITIS) is G2. Residues 81-84 (DCPG) are G3. GTP-binding positions include 81–85 (DCPGH) and 136–139 (NKCD). Residues 136–139 (NKCD) form a G4 region. Residues 174-176 (SAL) form a G5 region.

Belongs to the TRAFAC class translation factor GTPase superfamily. Classic translation factor GTPase family. EF-Tu/EF-1A subfamily. As to quaternary structure, monomer.

Its subcellular location is the cytoplasm. The catalysed reaction is GTP + H2O = GDP + phosphate + H(+). In terms of biological role, GTP hydrolase that promotes the GTP-dependent binding of aminoacyl-tRNA to the A-site of ribosomes during protein biosynthesis. The chain is Elongation factor Tu from Pseudoalteromonas atlantica (strain T6c / ATCC BAA-1087).